Reading from the N-terminus, the 54-residue chain is Large ribosomal subunit protein bL33B (54 aa).

Belongs to the bacterial ribosomal protein bL33 family.

The polypeptide is Large ribosomal subunit protein bL33B (Mycobacterium sp. (strain JLS)).